Here is a 1122-residue protein sequence, read N- to C-terminus: DNA polymerase (1122 aa).

Belongs to the DNA polymerase type-B family. Heterodimer with the terminal protein; this heterodimer binds to bp 9 to 18 of the genome. Forms a complex with viral pTP, DBP and hosts NFIA and POU2F1/OCT1 for initiation of replication.

It localises to the host nucleus. The enzyme catalyses DNA(n) + a 2'-deoxyribonucleoside 5'-triphosphate = DNA(n+1) + diphosphate. Eukaryotic-type DNA polymerase involved in viral genomic replication. DNA synthesis is protein primed, and acts in a strand displacement replication. Assembles in complex with viral pTP, DBP, host NFIA and host POU2F1/OCT1 on viral origin of replication. The polymerase covalently transfers dCMP onto pTP, thereby initiating complementary strand synthesis. The sequence is that of DNA polymerase from Human adenovirus B serotype 7 (HAdV-7).